The following is a 428-amino-acid chain: Enolase (428 aa).

Gln-163 is a (2R)-2-phosphoglycerate binding site. The active-site Proton donor is the Glu-205. Mg(2+) is bound by residues Asp-242, Glu-284, and Asp-311. (2R)-2-phosphoglycerate-binding residues include Lys-336, Arg-365, Ser-366, and Lys-387. Residue Lys-336 is the Proton acceptor of the active site.

It belongs to the enolase family. Requires Mg(2+) as cofactor.

It is found in the cytoplasm. The protein resides in the secreted. Its subcellular location is the cell surface. It catalyses the reaction (2R)-2-phosphoglycerate = phosphoenolpyruvate + H2O. It functions in the pathway carbohydrate degradation; glycolysis; pyruvate from D-glyceraldehyde 3-phosphate: step 4/5. Functionally, catalyzes the reversible conversion of 2-phosphoglycerate (2-PG) into phosphoenolpyruvate (PEP). It is essential for the degradation of carbohydrates via glycolysis. The protein is Enolase of Tropheryma whipplei (strain TW08/27) (Whipple's bacillus).